The sequence spans 336 residues: Anthranilate phosphoribosyltransferase (336 aa).

5-phospho-alpha-D-ribose 1-diphosphate contacts are provided by residues G82, 85–86 (GD), T90, 92–95 (NVST), 110–118 (KHGNRSVSS), and S122. G82 provides a ligand contact to anthranilate. S94 is a Mg(2+) binding site. N113 contacts anthranilate. An anthranilate-binding site is contributed by R168. Mg(2+) contacts are provided by D227 and E228.

Belongs to the anthranilate phosphoribosyltransferase family. In terms of assembly, homodimer. Mg(2+) is required as a cofactor.

It carries out the reaction N-(5-phospho-beta-D-ribosyl)anthranilate + diphosphate = 5-phospho-alpha-D-ribose 1-diphosphate + anthranilate. The protein operates within amino-acid biosynthesis; L-tryptophan biosynthesis; L-tryptophan from chorismate: step 2/5. In terms of biological role, catalyzes the transfer of the phosphoribosyl group of 5-phosphorylribose-1-pyrophosphate (PRPP) to anthranilate to yield N-(5'-phosphoribosyl)-anthranilate (PRA). The polypeptide is Anthranilate phosphoribosyltransferase (Leptospira borgpetersenii serovar Hardjo-bovis (strain JB197)).